Here is a 172-residue protein sequence, read N- to C-terminus: Epididymal secretory protein 4 (172 aa).

The first 21 residues, 1–21 (MIAVLLLVFGMTPDYIFPVSA), serve as a signal peptide directing secretion. Residues cysteine 82 and cysteine 167 are joined by a disulfide bond.

This sequence belongs to the calycin superfamily. Lipocalin family. Secreted by the epididymal epithelial cells.

The protein resides in the secreted. Its subcellular location is the extracellular space. In terms of biological role, could transport small hydrophobic molecules into the epididymal fluid during the sperm maturation. Binds to the head region of spermatozoa and plays a key role in sperm maturation. This is Epididymal secretory protein 4 from Zootoca vivipara (Common lizard).